Here is a 407-residue protein sequence, read N- to C-terminus: Arginine biosynthesis bifunctional protein ArgJ (407 aa).

The substrate site is built by T169, K192, T203, E283, N402, and S407. Catalysis depends on T203, which acts as the Nucleophile.

This sequence belongs to the ArgJ family. As to quaternary structure, heterotetramer of two alpha and two beta chains.

It is found in the cytoplasm. It carries out the reaction N(2)-acetyl-L-ornithine + L-glutamate = N-acetyl-L-glutamate + L-ornithine. It catalyses the reaction L-glutamate + acetyl-CoA = N-acetyl-L-glutamate + CoA + H(+). It functions in the pathway amino-acid biosynthesis; L-arginine biosynthesis; L-ornithine and N-acetyl-L-glutamate from L-glutamate and N(2)-acetyl-L-ornithine (cyclic): step 1/1. It participates in amino-acid biosynthesis; L-arginine biosynthesis; N(2)-acetyl-L-ornithine from L-glutamate: step 1/4. Catalyzes two activities which are involved in the cyclic version of arginine biosynthesis: the synthesis of N-acetylglutamate from glutamate and acetyl-CoA as the acetyl donor, and of ornithine by transacetylation between N(2)-acetylornithine and glutamate. This chain is Arginine biosynthesis bifunctional protein ArgJ, found in Mycobacterium leprae (strain TN).